We begin with the raw amino-acid sequence, 89 residues long: Cell division protein ZapA (89 aa).

The protein belongs to the ZapA family. Type 2 subfamily. As to quaternary structure, homodimer. Interacts with FtsZ.

It is found in the cytoplasm. In terms of biological role, activator of cell division through the inhibition of FtsZ GTPase activity, therefore promoting FtsZ assembly into bundles of protofilaments necessary for the formation of the division Z ring. It is recruited early at mid-cell but it is not essential for cell division. This Bacillus thuringiensis (strain Al Hakam) protein is Cell division protein ZapA.